Reading from the N-terminus, the 348-residue chain is Nicotinate-nucleotide--dimethylbenzimidazole phosphoribosyltransferase (348 aa).

Glutamate 316 serves as the catalytic Proton acceptor.

Belongs to the CobT family.

It catalyses the reaction 5,6-dimethylbenzimidazole + nicotinate beta-D-ribonucleotide = alpha-ribazole 5'-phosphate + nicotinate + H(+). Its pathway is nucleoside biosynthesis; alpha-ribazole biosynthesis; alpha-ribazole from 5,6-dimethylbenzimidazole: step 1/2. Its function is as follows. Catalyzes the synthesis of alpha-ribazole-5'-phosphate from nicotinate mononucleotide (NAMN) and 5,6-dimethylbenzimidazole (DMB). This Xanthomonas campestris pv. campestris (strain B100) protein is Nicotinate-nucleotide--dimethylbenzimidazole phosphoribosyltransferase.